We begin with the raw amino-acid sequence, 63 residues long: Large ribosomal subunit protein uL29 (63 aa).

It belongs to the universal ribosomal protein uL29 family.

This is Large ribosomal subunit protein uL29 from Pseudomonas fluorescens (strain ATCC BAA-477 / NRRL B-23932 / Pf-5).